The sequence spans 93 residues: Vacuolar ATPase assembly integral membrane protein VMA21 (93 aa).

Over 1–21 the chain is Cytoplasmic; sequence MSNRVSTGKMAMAPQESVQPA. The chain crosses the membrane as a helical span at residues 22 to 42; sequence VLYKLVLFALLMAVVPIGTYF. Residues 43–54 lie on the Lumenal side of the membrane; it reads STLNYLWDGSTT. Residues 55–75 traverse the membrane as a helical segment; sequence FAAISAIAAANLILVGYVVVA. Topologically, residues 76–93 are cytoplasmic; that stretch reads FREDAASRTGPLPEKKTS. The Prevents secretion from ER motif lies at 90-93; that stretch reads KKTS.

This sequence belongs to the VMA21 family.

The protein resides in the endoplasmic reticulum membrane. Its subcellular location is the endoplasmic reticulum-Golgi intermediate compartment membrane. It is found in the cytoplasmic vesicle. The protein localises to the COPII-coated vesicle membrane. Required for the assembly of the V0 complex of the vacuolar ATPase (V-ATPase) in the endoplasmic reticulum. The polypeptide is Vacuolar ATPase assembly integral membrane protein VMA21 (Cryptococcus neoformans var. neoformans serotype D (strain JEC21 / ATCC MYA-565) (Filobasidiella neoformans)).